A 211-amino-acid chain; its full sequence is Mitotic spindle assembly checkpoint protein MAD2B (211 aa).

One can recognise an HORMA domain in the interval 13–203; it reads QVVADVLCEF…SDILKMQLYV (191 aa). The tract at residues 21-155 is mediates interaction with REV1 and REV3L and homodimerization; the sequence is EFLEVAVHLI…FTVLVHTREA (135 aa).

In terms of assembly, homooligomer. Heterodimer with REV3L. This dimer forms the minimal DNA polymerase zeta complex (Pol-zeta2), with REV3L bearing DNA polymerase catalytic activity, although its activity is very low in this context. Component of the tetrameric Pol-zeta complex (Pol-zeta4), which consists of REV3L, MAD2L2, POLD2 and POLD3; Pol-zeta4 is the fully active form of DNA polymerase zeta. Component of the shieldin complex, consisting of SHLD1, SHLD2, SHLD3 and MAD2L2/REV7. Within the complex, SHLD2 forms a scaffold which interacts with a SHLD3-MAD2L2 subcomplex via its N-terminus, and with SHLD1 via its C-terminus. Interacts with REV1. Interacts with ADAM9. Interacts with CHAMP1. Interacts with FZR1 (in complex with the anaphase promoting complex APC). May interact with CDC20. Interacts with RAN. Interacts with ELK1; the interaction is direct and recruits MAD2L2 to ELK1-specific promoters. May interact with the JNK kinases MAPK8 and/or MAPK9 to stimulate ELK1 phosphorylation and transcriptional activity upon DNA damage. Interacts with TCF7L2; prevents its binding to promoters and negatively modulates its transcriptional activity. Interacts with YY1AP1. Interacts with PRCC; the interaction is direct. Interacts with POGZ. Interacts with ASTE1.

It is found in the nucleus. The protein resides in the cytoplasm. Its subcellular location is the cytoskeleton. It localises to the spindle. Its function is as follows. Adapter protein able to interact with different proteins and involved in different biological processes. Mediates the interaction between the error-prone DNA polymerase zeta catalytic subunit REV3L and the inserter polymerase REV1, thereby mediating the second polymerase switching in translesion DNA synthesis. Translesion DNA synthesis releases the replication blockade of replicative polymerases, stalled in presence of DNA lesions. Component of the shieldin complex, which plays an important role in repair of DNA double-stranded breaks (DSBs). During G1 and S phase of the cell cycle, the complex functions downstream of TP53BP1 to promote non-homologous end joining (NHEJ) and suppress DNA end resection. Mediates various NHEJ-dependent processes including immunoglobulin class-switch recombination, and fusion of unprotected telomeres. May also regulate another aspect of cellular response to DNA damage through regulation of the JNK-mediated phosphorylation and activation of the transcriptional activator ELK1. Inhibits the FZR1- and probably CDC20-mediated activation of the anaphase promoting complex APC thereby regulating progression through the cell cycle. Regulates TCF7L2-mediated gene transcription and may play a role in epithelial-mesenchymal transdifferentiation. In Bos taurus (Bovine), this protein is Mitotic spindle assembly checkpoint protein MAD2B (MAD2L2).